A 233-amino-acid chain; its full sequence is Uridylate kinase (233 aa).

ATP is bound by residues 8–11, glycine 51, and arginine 55; that span reads KLSG. UMP-binding positions include aspartate 68 and 129–136; that span reads TSNPFFTT. Threonine 156, tyrosine 162, and aspartate 165 together coordinate ATP.

It belongs to the UMP kinase family. Homohexamer.

The protein localises to the cytoplasm. The catalysed reaction is UMP + ATP = UDP + ADP. It functions in the pathway pyrimidine metabolism; CTP biosynthesis via de novo pathway; UDP from UMP (UMPK route): step 1/1. Its activity is regulated as follows. Inhibited by UTP. Catalyzes the reversible phosphorylation of UMP to UDP. The sequence is that of Uridylate kinase from Pseudothermotoga lettingae (strain ATCC BAA-301 / DSM 14385 / NBRC 107922 / TMO) (Thermotoga lettingae).